The following is a 101-amino-acid chain: MAKGQSLQDPFLNALRRERVPVSIYLVNGIKLQGQIESFDQFVILLKNTVSQMVYKHAISTVVPSRPVSHHNNNPSGGSSNYHHGSTPASQPSQPESDDAE.

The region spanning 9 to 68 (DPFLNALRRERVPVSIYLVNGIKLQGQIESFDQFVILLKNTVSQMVYKHAISTVVPSRPV) is the Sm domain. The interval 63–101 (VPSRPVSHHNNNPSGGSSNYHHGSTPASQPSQPESDDAE) is disordered. A compositionally biased stretch (low complexity) spans 70 to 86 (HHNNNPSGGSSNYHHGS).

Belongs to the Hfq family. Homohexamer.

Functionally, RNA chaperone that binds small regulatory RNA (sRNAs) and mRNAs to facilitate mRNA translational regulation in response to envelope stress, environmental stress and changes in metabolite concentrations. Also binds with high specificity to tRNAs. In Sodalis glossinidius (strain morsitans), this protein is RNA-binding protein Hfq.